A 265-amino-acid chain; its full sequence is 4-hydroxy-tetrahydrodipicolinate reductase (265 aa).

NAD(+) is bound by residues 7–12 (GASGRM) and aspartate 33. Arginine 34 is a binding site for NADP(+). NAD(+)-binding positions include 96-98 (GTT) and 120-123 (AANM). The active-site Proton donor/acceptor is the histidine 153. Histidine 154 provides a ligand contact to (S)-2,3,4,5-tetrahydrodipicolinate. Lysine 157 (proton donor) is an active-site residue. 163-164 (GT) contributes to the (S)-2,3,4,5-tetrahydrodipicolinate binding site.

This sequence belongs to the DapB family.

It localises to the cytoplasm. It carries out the reaction (S)-2,3,4,5-tetrahydrodipicolinate + NAD(+) + H2O = (2S,4S)-4-hydroxy-2,3,4,5-tetrahydrodipicolinate + NADH + H(+). It catalyses the reaction (S)-2,3,4,5-tetrahydrodipicolinate + NADP(+) + H2O = (2S,4S)-4-hydroxy-2,3,4,5-tetrahydrodipicolinate + NADPH + H(+). The protein operates within amino-acid biosynthesis; L-lysine biosynthesis via DAP pathway; (S)-tetrahydrodipicolinate from L-aspartate: step 4/4. Catalyzes the conversion of 4-hydroxy-tetrahydrodipicolinate (HTPA) to tetrahydrodipicolinate. This Burkholderia ambifaria (strain MC40-6) protein is 4-hydroxy-tetrahydrodipicolinate reductase.